A 176-amino-acid polypeptide reads, in one-letter code: Probable DNA-directed RNA polymerase subunit delta (176 aa).

In terms of domain architecture, HTH HARE-type spans 14-81 (LSLIDVAHFI…GNNMWGLRAW (68 aa)). 2 disordered regions span residues 91–119 (VQTQTTPKKKRKSDDDDDEEILDDDVDYD) and 140–176 (DEDEDEDDHLPDGIEGDLATVEDDYTDGDYTEDPEDK). Acidic residues-rich tracts occupy residues 105–119 (DDDDEEILDDDVDYD) and 159–176 (TVEDDYTDGDYTEDPEDK).

Belongs to the RpoE family. RNAP is composed of a core of 2 alpha, a beta and a beta' subunits. The core is associated with a delta subunit and one of several sigma factors.

Its function is as follows. Participates in both the initiation and recycling phases of transcription. In the presence of the delta subunit, RNAP displays an increased specificity of transcription, a decreased affinity for nucleic acids, and an increased efficiency of RNA synthesis because of enhanced recycling. In Listeria welshimeri serovar 6b (strain ATCC 35897 / DSM 20650 / CCUG 15529 / CIP 8149 / NCTC 11857 / SLCC 5334 / V8), this protein is Probable DNA-directed RNA polymerase subunit delta.